Reading from the N-terminus, the 548-residue chain is Chaperonin GroEL 1 (548 aa).

ATP contacts are provided by residues 30-33 (TLGP), lysine 51, 87-91 (DGTTT), glycine 415, 479-481 (NAA), and aspartate 495.

It belongs to the chaperonin (HSP60) family. As to quaternary structure, forms a cylinder of 14 subunits composed of two heptameric rings stacked back-to-back. Interacts with the co-chaperonin GroES.

The protein localises to the cytoplasm. The catalysed reaction is ATP + H2O + a folded polypeptide = ADP + phosphate + an unfolded polypeptide.. In terms of biological role, together with its co-chaperonin GroES, plays an essential role in assisting protein folding. The GroEL-GroES system forms a nano-cage that allows encapsulation of the non-native substrate proteins and provides a physical environment optimized to promote and accelerate protein folding. This Anaeromyxobacter dehalogenans (strain 2CP-C) protein is Chaperonin GroEL 1.